Consider the following 481-residue polypeptide: MTTFVDRVVLHLQAGDGGHGCVSIHREKFKPFGGPDGGNGGHGGSVSLVVDPQVHTLLDFHFRPHVKASNGKGGAGSNRDGANGADLVLRVPNGTVVQTTGGTVLADLVGAGTTFEVARGGRGGRGNAALANARRKAPGFAELGEPGDKLDAVLELKSVADIGLVGYPSAGKSSLISVISAAKPKIADYPFTTLVPNLGVVRVDNHTFTVADVPGLIPGAATGKGLGLEFLRHVERCAVLVHVVDTATLETARDPVADIDAIEAELTAYGGLADRPRLVALNKIDVPDGRDLAEIVRPDLEARGFRVFEVSAATREGLKELMFAMGELVAAARAAAPPVEPTRIVIRPKAVDDAGFTVEAAPDGAWVVRGTRPERWIRQTNFDNEEAVGYLADRLARLGVEEKLGKAGAQAGDLVRIGEREFDWHPTLYAEFVPGVRGGDQRLAEKTQRPSAAERLAARKARRQRPGDEPESDELDGDSGE.

The Obg domain maps to 2 to 159 (TTFVDRVVLH…LDAVLELKSV (158 aa)). The OBG-type G domain maps to 160–330 (ADIGLVGYPS…LMFAMGELVA (171 aa)). GTP-binding positions include 166–173 (GYPSAGKS), 191–195 (FTTLV), 212–215 (DVPG), 282–285 (NKID), and 311–313 (SAA). Mg(2+) is bound by residues serine 173 and threonine 193. One can recognise an OCT domain in the interval 348–426 (PKAVDDAGFT…IGEREFDWHP (79 aa)). Positions 440-481 (DQRLAEKTQRPSAAERLAARKARRQRPGDEPESDELDGDSGE) are disordered. A compositionally biased stretch (acidic residues) spans 469–481 (EPESDELDGDSGE).

It belongs to the TRAFAC class OBG-HflX-like GTPase superfamily. OBG GTPase family. In terms of assembly, monomer. The cofactor is Mg(2+).

The protein localises to the cytoplasm. Its function is as follows. An essential GTPase which binds GTP, GDP and possibly (p)ppGpp with moderate affinity, with high nucleotide exchange rates and a fairly low GTP hydrolysis rate. Plays a role in control of the cell cycle, stress response, ribosome biogenesis and in those bacteria that undergo differentiation, in morphogenesis control. The chain is GTPase Obg from Salinispora arenicola (strain CNS-205).